A 206-amino-acid chain; its full sequence is Small ribosomal subunit protein uS4 (206 aa).

The 61-residue stretch at 96 to 156 (CRLDNVVYRM…EKAKNQLRIV (61 aa)) folds into the S4 RNA-binding domain.

It belongs to the universal ribosomal protein uS4 family. Part of the 30S ribosomal subunit. Contacts protein S5. The interaction surface between S4 and S5 is involved in control of translational fidelity.

Its function is as follows. One of the primary rRNA binding proteins, it binds directly to 16S rRNA where it nucleates assembly of the body of the 30S subunit. With S5 and S12 plays an important role in translational accuracy. The protein is Small ribosomal subunit protein uS4 of Pseudomonas fluorescens (strain ATCC BAA-477 / NRRL B-23932 / Pf-5).